Reading from the N-terminus, the 159-residue chain is UPF0699 transmembrane protein YdbS (159 aa).

A run of 2 helical transmembrane segments spans residues 22–42 (IIIS…SYYF) and 47–67 (WISG…VFII).

It belongs to the UPF0699 family.

The protein localises to the cell membrane. This Bacillus subtilis (strain 168) protein is UPF0699 transmembrane protein YdbS (ydbS).